A 638-amino-acid chain; its full sequence is Glucans biosynthesis glucosyltransferase H (638 aa).

6 helical membrane passes run 60–82 (FYLIGGTMAMSLIATWVMLAVMW), 97–119 (FMFLFAWVTMSFASALAGFFCVV), 415–437 (IGHYFTAPMWGLLMLVGIAIPLV), 464–486 (LWIFTFTMFVLLAPKLLAYFALL), 499–521 (LRVLLSILLESILAALMAPVVMY), and 578–600 (LAMWMSPVVLGMAFSVPVVALTS).

This sequence belongs to the glycosyltransferase 2 family. OpgH subfamily.

It localises to the cell inner membrane. Its pathway is glycan metabolism; osmoregulated periplasmic glucan (OPG) biosynthesis. Involved in the biosynthesis of osmoregulated periplasmic glucans (OPGs). The protein is Glucans biosynthesis glucosyltransferase H of Xylella fastidiosa (strain 9a5c).